The sequence spans 268 residues: Energy-coupling factor transporter transmembrane protein EcfT (268 aa).

The next 5 membrane-spanning stretches (helical) occupy residues 29–49 (VFIFLVFMFMTRDPLLLTVAV), 75–95 (IIIVLTFVLHLFMTGGGEVIV), 107–127 (LIEGFMLAMKLAMIITIASLL), 152–172 (LPTHELALMMSIALRFIPTLI), and 242–262 (WGLKDSVVLAVFLLFAAAVMA).

Belongs to the energy-coupling factor EcfT family. In terms of assembly, forms a stable energy-coupling factor (ECF) transporter complex composed of 2 membrane-embedded substrate-binding proteins (S component), 2 ATP-binding proteins (A component) and 2 transmembrane proteins (T component). May be able to interact with more than 1 S component at a time.

Its subcellular location is the cell membrane. In terms of biological role, transmembrane (T) component of an energy-coupling factor (ECF) ABC-transporter complex. Unlike classic ABC transporters this ECF transporter provides the energy necessary to transport a number of different substrates. The sequence is that of Energy-coupling factor transporter transmembrane protein EcfT from Bacillus selenitireducens (strain ATCC 700615 / DSM 15326 / MLS10).